Here is a 360-residue protein sequence, read N- to C-terminus: MTQTLQVKSRINDYPIIFTDDIFQPLNQFLAEKGDVKLLFITDQTVFDLYQPLFRRFQQDYDSYLHIAAPGGQSKSLEEVSRIYDRLIRANFSKKDVIVTVGGGVIGDLGGFVAATFYRGISYVQIPTTLLSQVDSSIGGKVGVHFKGLTNMIGSIYPPNQIIVSAKFLDTLSEREFACGISEMIKIGFIHDRKLFQQLLAFPKDRNQEQLRQMIFQAICHKKRVVEKDEFEGNLRMSLNFGHTLGHAIEALCHHELYRHGEAIAIGMVFEAKLAVQQQLLSQQDLEALQAAFEAYQLPTTLEAKSMTAEALMTVLKTDKKNSGQHIVLILPTTKGYVSFPIAKHDSRLLDWLRSLLDIA.

NAD(+) is bound by residues 104–108 (GVIGD), 128–129 (TT), Lys141, and 168–171 (FLDT). Glu183, His243, and His260 together coordinate Zn(2+).

It belongs to the sugar phosphate cyclases superfamily. Dehydroquinate synthase family. The cofactor is Co(2+). Requires Zn(2+) as cofactor. NAD(+) serves as cofactor.

Its subcellular location is the cytoplasm. The enzyme catalyses 7-phospho-2-dehydro-3-deoxy-D-arabino-heptonate = 3-dehydroquinate + phosphate. The protein operates within metabolic intermediate biosynthesis; chorismate biosynthesis; chorismate from D-erythrose 4-phosphate and phosphoenolpyruvate: step 2/7. Its function is as follows. Catalyzes the conversion of 3-deoxy-D-arabino-heptulosonate 7-phosphate (DAHP) to dehydroquinate (DHQ). This chain is 3-dehydroquinate synthase, found in Streptococcus equi subsp. equi (strain 4047).